We begin with the raw amino-acid sequence, 209 residues long: Ribosomal RNA large subunit methyltransferase E (209 aa).

S-adenosyl-L-methionine-binding residues include Gly63, Trp65, Asp83, Asp99, and Asp124. Lys164 acts as the Proton acceptor in catalysis.

The protein belongs to the class I-like SAM-binding methyltransferase superfamily. RNA methyltransferase RlmE family.

The protein localises to the cytoplasm. It catalyses the reaction uridine(2552) in 23S rRNA + S-adenosyl-L-methionine = 2'-O-methyluridine(2552) in 23S rRNA + S-adenosyl-L-homocysteine + H(+). Its function is as follows. Specifically methylates the uridine in position 2552 of 23S rRNA at the 2'-O position of the ribose in the fully assembled 50S ribosomal subunit. The polypeptide is Ribosomal RNA large subunit methyltransferase E (Vibrio parahaemolyticus serotype O3:K6 (strain RIMD 2210633)).